Here is a 76-residue protein sequence, read N- to C-terminus: Alpha/kappa-conotoxin-like pl14.1 (76 aa).

A signal peptide spans 1-27 (MPSVRSVTCCCLLWMMLSVQLVTPGSP). A propeptide spanning residues 28–39 (ATAQLSGQRTAR) is cleaved from the precursor. Disulfide bonds link cysteine 46/cysteine 61 and cysteine 50/cysteine 63. An Asparagine amide modification is found at asparagine 64. The propeptide occupies 65-76 (GKRDVVSSSMAV).

Belongs to the conotoxin J superfamily. As to expression, expressed by the venom duct.

The protein resides in the secreted. Its function is as follows. Highly inhibits both nicotinic acetylcholine receptors (neuronal (alpha-3/beta-4) and muscular (alpha-1/beta-1/epsilon/delta) subtypes) and the voltage-gated potassium channel Kv1.6/KCNA6 subtype. This Conus planorbis (Planorbis cone) protein is Alpha/kappa-conotoxin-like pl14.1.